The primary structure comprises 520 residues: Cobyric acid synthase (520 aa).

Positions 275-453 (VLRVAVIRLP…WHGVLENDAF (179 aa)) constitute a GATase cobBQ-type domain. C356 (nucleophile) is an active-site residue. H445 is a catalytic residue.

The protein belongs to the CobB/CobQ family. CobQ subfamily.

It functions in the pathway cofactor biosynthesis; adenosylcobalamin biosynthesis. Catalyzes amidations at positions B, D, E, and G on adenosylcobyrinic A,C-diamide. NH(2) groups are provided by glutamine, and one molecule of ATP is hydrogenolyzed for each amidation. This Frankia casuarinae (strain DSM 45818 / CECT 9043 / HFP020203 / CcI3) protein is Cobyric acid synthase.